The primary structure comprises 282 residues: Osteoclast-associated immunoglobulin-like receptor (282 aa).

Residues 1-18 (MALVLILQLLTLWPLCHT) form the signal peptide. Ig-like domains are found at residues 22–116 (PSVP…SQPS) and 126–219 (ELPR…SWEG). N-linked (GlcNAc...) asparagine glycosylation occurs at Asn48. A disulfide bridge links Cys53 with Cys100. A glycan (N-linked (GlcNAc...) asparagine) is linked at Asn145. A disordered region spans residues 221–282 (GPEARPASSA…PAPPPSDPGV (62 aa)). Residues 273-282 (PAPPPSDPGV) show a composition bias toward pro residues.

This sequence belongs to the leukocyte receptor complex/polymeric immunoglobulin receptor (PIR/LRC) family.

It is found in the secreted. The protein resides in the cell membrane. Functionally, regulator of osteoclastogenesis which plays an important bone-specific function in osteoclast differentiation. In Homo sapiens (Human), this protein is Osteoclast-associated immunoglobulin-like receptor (OSCAR).